A 68-amino-acid chain; its full sequence is Acylphosphatase (68 aa).

An Acylphosphatase-like domain is found at arginine 3–proline 68. Active-site residues include arginine 18 and asparagine 36.

The protein belongs to the acylphosphatase family.

It carries out the reaction an acyl phosphate + H2O = a carboxylate + phosphate + H(+). The protein is Acylphosphatase (acyP) of Oleidesulfovibrio alaskensis (strain ATCC BAA-1058 / DSM 17464 / G20) (Desulfovibrio alaskensis).